The sequence spans 158 residues: Transcription elongation factor GreA (158 aa).

Residues Glu47–Ala75 adopt a coiled-coil conformation.

Belongs to the GreA/GreB family.

Necessary for efficient RNA polymerase transcription elongation past template-encoded arresting sites. The arresting sites in DNA have the property of trapping a certain fraction of elongating RNA polymerases that pass through, resulting in locked ternary complexes. Cleavage of the nascent transcript by cleavage factors such as GreA or GreB allows the resumption of elongation from the new 3'terminus. GreA releases sequences of 2 to 3 nucleotides. The sequence is that of Transcription elongation factor GreA from Oceanobacillus iheyensis (strain DSM 14371 / CIP 107618 / JCM 11309 / KCTC 3954 / HTE831).